Here is a 635-residue protein sequence, read N- to C-terminus: Allantoin permease (635 aa).

Over 1-144 the chain is Cytoplasmic; sequence MANDALSAIF…AGTGLQLGLN (144 aa). Residues 145–165 traverse the membrane as a helical segment; sequence WWQCWLTVWIGYTFAGIFVVL. The Extracellular portion of the chain corresponds to 166-174; the sequence is NSRFGSAYH. The chain crosses the membrane as a helical span at residues 175 to 195; the sequence is LSFPITVRASFGIFFSMWPII. The Cytoplasmic segment spans residues 196–198; sequence NRV. Residues 199-219 traverse the membrane as a helical segment; it reads VMAIVWYAVQAWLGATPVALM. Residues 220–243 lie on the Extracellular side of the membrane; the sequence is LKSIFGKNLEDRIPNHFGSPNSTT. The helical transmembrane segment at 244-264 threads the bilayer; the sequence is FEFMCFFIFWVVSIPFVLVAP. Over 265–269 the chain is Cytoplasmic; sequence HKIRH. The chain crosses the membrane as a helical span at residues 270–290; that stretch reads LFTVKAALIPFAAFGFLIWAL. The Extracellular segment spans residues 291-311; that stretch reads KKSHGKIELGTLNDYSPHGSE. Residues 312–332 traverse the membrane as a helical segment; the sequence is FSWIFVRSLMACVANFAALII. Residues 333–351 are Cytoplasmic-facing; it reads NAPDFGRFAKNPQASLWPQ. The chain crosses the membrane as a helical span at residues 352-372; sequence LVAIPLFFAITCLIGIIVTAA. Topologically, residues 373 to 401 are extracellular; that stretch reads GYHLYGVNYWSPLDVLGQFLETTYTRGTR. A helical membrane pass occupies residues 402 to 422; that stretch reads AGVFLISFVFALAQLGTNISA. The Cytoplasmic segment spans residues 423 to 443; that stretch reads NSLACGADMTALFPRYINIRR. The helical transmembrane segment at 444–464 threads the bilayer; sequence GSLFCVAMALCICPWNLMASS. Topologically, residues 465-466 are extracellular; sequence SK. A helical transmembrane segment spans residues 467 to 487; the sequence is FTSALGAYAIFLSSIAGVICA. The Cytoplasmic portion of the chain corresponds to 488 to 522; that stretch reads DYFVVRRGYVKLTHLFLAQKGSFYMFGNKFGANWR. A helical membrane pass occupies residues 523–543; that stretch reads AFVAYICGIAPNLPGFIGDVG. The Extracellular segment spans residues 544–560; that stretch reads APKITVSEGAMRLYYLG. The helical transmembrane segment at 561–581 threads the bilayer; the sequence is YPVGFFISAVIYLILCYFFPV. Residues 582–635 are Cytoplasmic-facing; it reads PGTPVTNFLTEKGWFQRWAYVEDFEQDWKNELRRDDLCDDTVSIYDGTEEKIVY.

This sequence belongs to the purine-cytosine permease (2.A.39) family.

The protein localises to the membrane. Its function is as follows. Transport of allantoin. This Saccharomyces cerevisiae (strain ATCC 204508 / S288c) (Baker's yeast) protein is Allantoin permease (DAL4).